Reading from the N-terminus, the 573-residue chain is DNA damage-binding protein CMR1 (573 aa).

Positions 27 to 94 (DSLNDSISRE…EMEKAEERKR (68 aa)) are disordered. Residues 72–152 (TMEDSEEDKQ…EEIKKEEDST (81 aa)) adopt a coiled-coil conformation. Basic and acidic residues predominate over residues 79-94 (DKQMREEMEKAEERKR). 7 WD repeats span residues 218 to 259 (ITQQ…DDET), 268 to 308 (PHGK…STEV), 319 to 357 (DYPL…KQGE), 361 to 401 (LHDK…QKNS), 418 to 456 (HSRL…KLPL), 495 to 538 (GRWV…LCHL), and 542 to 573 (DRMT…YLFE).

The protein belongs to the WD repeat DDB2/WDR76 family.

In terms of biological role, DNA-binding protein that binds to both single- and double-stranded DNA. Binds preferentially to UV-damaged DNA. May be involved in DNA-metabolic processes. The sequence is that of DNA damage-binding protein CMR1 from Meyerozyma guilliermondii (strain ATCC 6260 / CBS 566 / DSM 6381 / JCM 1539 / NBRC 10279 / NRRL Y-324) (Yeast).